A 645-amino-acid polypeptide reads, in one-letter code: Protein FAM47B (645 aa).

Composition is skewed to basic and acidic residues over residues 1–11 (MGDRRPQDRPR), 238–251 (EPPETRASHLRVDP), and 288–299 (PETRVSHLHPEP). Disordered regions lie at residues 1–23 (MGDRRPQDRPRSQGMDSKPWYCD) and 168–321 (AREK…SLCP).

The protein belongs to the FAM47 family.

The chain is Protein FAM47B (FAM47B) from Homo sapiens (Human).